The sequence spans 1074 residues: Pleckstrin homology domain-containing family M member 1 (1074 aa).

The RUN domain occupies 40–182 (TSEDGDANTM…LSFELSYKSA (143 aa)). Disordered stretches follow at residues 214-244 (QRKESLDSISHSSGSEDIEVQHSGHKIRRNR), 272-336 (LQEN…MFQT), and 382-454 (DEKQ…PPQE). A Phosphoserine modification is found at serine 218. 2 stretches are compositionally biased toward polar residues: residues 313 to 329 (SKAQVNSAPSSGPNQEP) and 393 to 404 (PAQSTSDQQPSS). Phosphoserine is present on residues serine 433, serine 436, and serine 491. Residues 506-526 (GNAQPAPAPAPAPAPAPAPAP) are disordered. A compositionally biased stretch (pro residues) spans 511 to 525 (APAPAPAPAPAPAPA). In terms of domain architecture, PH 1 spans 551 to 642 (GLMKLGTVAR…WLDRVREALQ (92 aa)). The LIR signature appears at 649-655 (EDEWVNI). The disordered stretch occupies residues 661–680 (AEDAPEAPPDSLPPYSTLLP). Residues 672–1074 (LPPYSTLLPE…RKYQEQNVVS (403 aa)) are interaction with RAB7A. Positions 701-795 (DAIKESLLYL…WRDLVRKVLA (95 aa)) constitute a PH 2 domain. A Phorbol-ester/DAG-type zinc finger spans residues 1004 to 1058 (QHVYHCDLCTQRGFICQICHHQDIIFPFEFDTTVRCAECRTVFHQSCQAVVRKGC).

As to quaternary structure, interacts (via N- and C-terminus) with RAB7A (GTP-bound form). Simultaneously interacts with RAB7A and ARL8B; bringing about clustering and fusion of late endosomes and lysosomes. Interacts (via RUN domain) with ARL8B (GTP-bound form); the interaction is required for PLEKHM1 localization to lysosomes and for ARL8B function in delivery and degradation of endocytic and autophagic cargo in lysosomes. PLEKHM1 and PLEKHM2 compete for interaction with ARL8B. Interacts with ARL8A; the interaction is weaker than with ARL8B. Interacts with VPS41, VPS11, VPS18, VPS33A and VPS39; indicative for an association with the HOPS complex; the interactions with, at least, VPS41, VPS11, VPS18 and VPS33A require ARL8B. Interacts with GABARAP, GABARAPL, GABARAPL2, MAP1LC3A, MAP1LC3B and MAP1LC3C. Interacts with PAFAH1B. Interacts (via N- and C-terminus) with NDEL1. Interacts (via C-terminus) with MAP3K7. Interacts (via N- and C-terminus) with FAM98A. Interacts (via C-terminus) with DEF8; this interaction is weak but increased in a RAB7A-dependent manner. May interact with sialyl-lex-positive protein.

Its subcellular location is the autolysosome membrane. It is found in the endosome membrane. The protein resides in the late endosome membrane. The protein localises to the lysosome membrane. In terms of biological role, acts as a multivalent adapter protein that regulates Rab7-dependent and HOPS complex-dependent fusion events in the endolysosomal system and couples autophagic and the endocytic trafficking pathways. Acts as a dual effector of RAB7A and ARL8B that simultaneously binds these GTPases, bringing about clustering and fusion of late endosomes and lysosomes. Required for late stages of endolysosomal maturation, facilitating both endocytosis-mediated degradation of growth factor receptors and autophagosome clearance. Interaction with Arl8b is a crucial factor in the terminal maturation of autophagosomes and to mediate autophagosome-lysosome fusion. Positively regulates lysosome peripheral distribution and ruffled border formation in osteoclasts. May be involved in negative regulation of endocytic transport from early endosome to late endosome/lysosome implicating its association with Rab7. May have a role in sialyl-lex-mediated transduction of apoptotic signals. Involved in bone resorption. The protein is Pleckstrin homology domain-containing family M member 1 of Mus musculus (Mouse).